The sequence spans 1373 residues: TAL effector protein PthXo1 (1373 aa).

Disordered regions lie at residues 1–68 (MDPI…SAGS) and 127–152 (AARPPRAKPAPRRRAAQPSDASPAAQ). Positions 131 to 141 (PRAKPAPRRRA) are enriched in basic residues. Positions 142–152 (AQPSDASPAAQ) are enriched in low complexity. The Cryptic repeat -1 repeat unit spans residues 221–239 (THEDIVGVGKQWSGARALE). Residues 256–273 (DTGQLVKIAKRGGVTAVE) form a Cryptic repeat 0 repeat. Core repeat repeat units follow at residues 289–322 (LTPAQVVAIASNNGGKQALETVQRLLPVLCQAHG), 323–356 (LTPAQVVAIASHDGGKQALETMQRLLPVLCQAHG), 357–390 (LPPDQVVAIASNIGGKQALETVQRLLPVLCQAHG), 391–424 (LTPDQVVAIASHGGGKQALETVQRLLPVLCQAHG), 425–458 (LTPDQVVAIASHDGGKQALETVQRLLPVLCQAHG), 459–492 (LTPDQVVAIASNGGGKQALETVQRLLPVLCQAHG), 493–525 (LTPDQVVAIASNGGKQALETVQRLLPVLCQAHG), 526–559 (LTPDQVVAIASHDGGKQALETVQRLLPVLCQTHG), 560–593 (LTPAQVVAIASHDGGKQALETVQQLLPVLCQAHG), 594–627 (LTPDQVVAIASNIGGKQALATVQRLLPVLCQAHG), 628–661 (LTPDQVVAIASNGGGKQALETVQRLLPVLCQAHG), 662–695 (LTPDQVVAIASNGGGKQALETVQRLLPVLCQAHG), 696–729 (LTQVQVVAIASNIGGKQALETVQRLLPVLCQAHG), 730–763 (LTPAQVVAIASHDGGKQALETVQRLLPVLCQAHG), 764–797 (LTPDQVVAIASNGGGKQALETVQRLLPVLCQAHG), 798–831 (LTQEQVVAIASNNGGKQALETVQRLLPVLCQAHG), 832–865 (LTPDQVVAIASNGGGKQALETVQRLLPVLCQAHG), 866–899 (LTPAQVVAIASNIGGKQALETVQRLLPVLCQDHG), 900–933 (LTLAQVVAIASNIGGKQALETVQRLLPVLCQAHG), 934–967 (LTQDQVVAIASNIGGKQALETVQRLLPVLCQDHG), 968–1001 (LTPDQVVAIASNIGGKQALETVQRLLPVLCQDHG), 1002–1034 (LTLDQVVAIASNGGKQALETVQRLLPVLCQDHG), and 1035–1068 (LTPDQVVAIASNSGGKQALETVQRLLPVLCQDHG). HEAT repeat units lie at residues 714-760 (LETV…VLCQ), 782-828 (LETV…VLCQ), 850-893 (LETV…LLPV), and 918-961 (LETV…LLPV). Residues 1053–1091 (LETVQRLLPVLCQDHGLTPNQVVAIASNGGKQALESIVA) form an HEAT 5 repeat. Residues 1069–1087 (LTPNQVVAIASNGGKQALE) form a Core repeat 23.5 repeat. Residues 1136 to 1364 (RVNRRIGERT…ELAWLMELLP (229 aa)) form an acidic activation domain region. The Nuclear localization signal NLS1 motif lies at 1222–1225 (KRAK). Residues 1250–1286 (LDAPSPMHEGDQTGASSRKRSRSDRAVTGPSAQHSFE) form a disordered region. A Nuclear localization signal NLS2 motif is present at residues 1268–1271 (KRSR). Residues 1305 to 1308 (KRPR) carry the Nuclear localization signal NLS3 motif.

It belongs to the transcription activator-like effector (TALE) family.

The protein resides in the secreted. It is found in the host nucleus. Its function is as follows. Avirulence protein. Acts as a transcription factor in rice, inducing expression of a number of host genes including SWEET11 (Os8N3, XA13, AC Q6YZF3) in susceptible plants with the Xa13 allele. Plants with the xa13 allele, which has an altered promoter, are resistant to bacterial blight caused by this bacterial strain and do not induce SWEET11. The xa13 allele elicits an atypical hypersensitive response (HR). PthXo1 binds SWEET11 promoter DNA in a sequence-specific manner. This Xanthomonas oryzae pv. oryzae (strain PXO99A) protein is TAL effector protein PthXo1 (pthXo1).